We begin with the raw amino-acid sequence, 286 residues long: ATP synthase gamma chain (286 aa).

It belongs to the ATPase gamma chain family. F-type ATPases have 2 components, CF(1) - the catalytic core - and CF(0) - the membrane proton channel. CF(1) has five subunits: alpha(3), beta(3), gamma(1), delta(1), epsilon(1). CF(0) has three main subunits: a, b and c.

The protein localises to the cell membrane. In terms of biological role, produces ATP from ADP in the presence of a proton gradient across the membrane. The gamma chain is believed to be important in regulating ATPase activity and the flow of protons through the CF(0) complex. This is ATP synthase gamma chain from Oceanobacillus iheyensis (strain DSM 14371 / CIP 107618 / JCM 11309 / KCTC 3954 / HTE831).